The following is an 810-amino-acid chain: Leucine--tRNA ligase (810 aa).

The short motif at 43–53 (PYPSGTLHIGH) is the 'HIGH' region element. The 'KMSKS' region signature appears at 578–582 (KMSKS). Lysine 581 lines the ATP pocket.

This sequence belongs to the class-I aminoacyl-tRNA synthetase family.

Its subcellular location is the cytoplasm. The enzyme catalyses tRNA(Leu) + L-leucine + ATP = L-leucyl-tRNA(Leu) + AMP + diphosphate. The chain is Leucine--tRNA ligase from Solibacter usitatus (strain Ellin6076).